The chain runs to 286 residues: NAD kinase (286 aa).

Residue Asp-74 is the Proton acceptor of the active site. NAD(+) contacts are provided by residues 74-75 (DG), 148-149 (ND), Asp-178, Ala-186, 189-194 (TAYNLS), and Gln-244.

The protein belongs to the NAD kinase family. The cofactor is a divalent metal cation.

It localises to the cytoplasm. It carries out the reaction NAD(+) + ATP = ADP + NADP(+) + H(+). Functionally, involved in the regulation of the intracellular balance of NAD and NADP, and is a key enzyme in the biosynthesis of NADP. Catalyzes specifically the phosphorylation on 2'-hydroxyl of the adenosine moiety of NAD to yield NADP. In Campylobacter jejuni subsp. jejuni serotype O:2 (strain ATCC 700819 / NCTC 11168), this protein is NAD kinase.